Consider the following 366-residue polypeptide: tRNA-specific 2-thiouridylase MnmA (366 aa).

ATP contacts are provided by residues 6 to 13 and Leu-32; that span reads AMSGGVDS. The active-site Nucleophile is the Cys-101. A disulfide bridge connects residues Cys-101 and Cys-198. Gly-125 serves as a coordination point for ATP. Residues 148–150 form an interaction with tRNA region; that stretch reads KDQ. Cys-198 (cysteine persulfide intermediate) is an active-site residue.

The protein belongs to the MnmA/TRMU family.

It is found in the cytoplasm. It carries out the reaction S-sulfanyl-L-cysteinyl-[protein] + uridine(34) in tRNA + AH2 + ATP = 2-thiouridine(34) in tRNA + L-cysteinyl-[protein] + A + AMP + diphosphate + H(+). Catalyzes the 2-thiolation of uridine at the wobble position (U34) of tRNA, leading to the formation of s(2)U34. This is tRNA-specific 2-thiouridylase MnmA from Nocardioides sp. (strain ATCC BAA-499 / JS614).